The primary structure comprises 593 residues: NADH-quinone oxidoreductase subunit C/D (593 aa).

The NADH dehydrogenase I subunit C stretch occupies residues 1–184 (MTADNALYIP…DPYSLTLAKQ (184 aa)). The NADH dehydrogenase I subunit D stretch occupies residues 208-593 (DYMFLNLGPN…IDFVMADVDR (386 aa)).

In the N-terminal section; belongs to the complex I 30 kDa subunit family. This sequence in the C-terminal section; belongs to the complex I 49 kDa subunit family. As to quaternary structure, NDH-1 is composed of 13 different subunits. Subunits NuoB, CD, E, F, and G constitute the peripheral sector of the complex.

It is found in the cell inner membrane. It carries out the reaction a quinone + NADH + 5 H(+)(in) = a quinol + NAD(+) + 4 H(+)(out). In terms of biological role, NDH-1 shuttles electrons from NADH, via FMN and iron-sulfur (Fe-S) centers, to quinones in the respiratory chain. The immediate electron acceptor for the enzyme in this species is believed to be ubiquinone. Couples the redox reaction to proton translocation (for every two electrons transferred, four hydrogen ions are translocated across the cytoplasmic membrane), and thus conserves the redox energy in a proton gradient. In Pseudomonas syringae pv. tomato (strain ATCC BAA-871 / DC3000), this protein is NADH-quinone oxidoreductase subunit C/D.